Consider the following 1249-residue polypeptide: Apoptotic protease-activating factor 1 (1249 aa).

The 90-residue stretch at 1–90 (MDAKARNCLL…KDLAALLQSG (90 aa)) folds into the CARD domain. Residues 106–415 (ITSFVRTVLC…LETEEVEDIL (310 aa)) enclose the NB-ARC domain. Residues 154–161 (GMAGCGKS) and arginine 265 contribute to the ATP site. One copy of the WD 1-1 repeat lies at 613-652 (PHTDAVYHACFSQDGQRIASCGADKTLQVFKAETGEKLLD). The stretch at 655–694 (AHEDEVLCCAFSSDDSYIATCSADKKVKIWDSATGKLVHT) is one WD 1-2 repeat. Residues 697-738 (EHSEQVNCCHFTNKSNHLLLATGSNDFFLKLWDLNQKECRNT) form a WD 1-3 repeat. The stretch at 741 to 780 (GHTNSVNHCRFSPDDELLASCSADGTLRLWDVRSANERKS) is one WD 1-4 repeat. A WD 1-5 repeat occupies 796-837 (DVEVIVKCCSWSADGDKIIVAAKNKVLLFDIHTSGLLAEIHT). Residues 838–877 (GHHSTIQYCDFSPYDHLAVIALSQYCVELWNIDSRLKVAD) form a WD 1-6 repeat. One copy of the WD 1-7 repeat lies at 880-910 (GHLSWVHGVMFSPDGSSFLTASDDQTIRVWE). The tract at residues 910–921 (ETKKVCKNSAIV) is interpropeller linker. A WD 2-1 repeat occupies 922–958 (LKQEIDVVFQENETMVLAVDNIRGLQLIAGKTGQIDY). Residues 959 to 998 (LPEAQVSCCCLSPHLEYVAFGDEDGAIKIIELPNNRVFSS) form a WD 2-2 repeat. The stretch at 1001 to 1040 (GHKKAVRHIQFTADGKTLISSSEDSVIQVWNWQTGDYVFL) is one WD 2-3 repeat. One copy of the WD 2-4 repeat lies at 1042 to 1080 (AHQETVKDFRLLQDSRLLSWSFDGTVKVWNVITGRIERD). Residues 1083 to 1122 (CHQGTVLSCAISSDATKFSSTSADKTAKIWSFDLLSPLHE) form a WD 2-5 repeat. The WD 2-6 repeat unit spans residues 1125-1164 (GHNGCVRCSAFSLDGILLATGDDNGEIRIWNVSDGQLLHS). The WD 2-7 repeat unit spans residues 1176–1213 (THGGWVTDVCFSPDSKTLVSAGGYLKWWNVATGDSSQT). One copy of the WD 2-8 repeat lies at 1214-1249 (FYTNGTNLKKIHVSPDFRTYVTVDNLGILYILQVLE).

As to quaternary structure, monomer. Oligomerizes to a heptameric ring, known as the apoptosome, upon binding of cytochrome c and dATP. Oligomeric Apaf-1 and pro-caspase-9 bind to each other via their respective NH2-terminal CARD domains and consecutively mature caspase-9 is released from the complex. Interacts with UACA. It may also interact with Bcl-XL. Interacts with APIP. Interacts (via CARD and NACHT domains) with NAIP/BIRC1 (via NACHT domain). Interacts with CIAO2A. As to expression, highly expressed in lung and spleen, weakly in brain and kidney and not detectable in liver.

It localises to the cytoplasm. In terms of biological role, oligomeric Apaf-1 mediates the cytochrome c-dependent autocatalytic activation of pro-caspase-9 (Apaf-3), leading to the activation of caspase-3 and apoptosis. This activation requires ATP. The chain is Apoptotic protease-activating factor 1 (Apaf1) from Mus musculus (Mouse).